Reading from the N-terminus, the 285-residue chain is Probable endonuclease 4 (285 aa).

Positions 68, 108, 145, 179, 182, 216, 229, 231, and 261 each coordinate Zn(2+).

The protein belongs to the AP endonuclease 2 family. Requires Zn(2+) as cofactor.

It catalyses the reaction Endonucleolytic cleavage to 5'-phosphooligonucleotide end-products.. Endonuclease IV plays a role in DNA repair. It cleaves phosphodiester bonds at apurinic or apyrimidinic (AP) sites, generating a 3'-hydroxyl group and a 5'-terminal sugar phosphate. This chain is Probable endonuclease 4, found in Geotalea daltonii (strain DSM 22248 / JCM 15807 / FRC-32) (Geobacter daltonii).